Consider the following 195-residue polypeptide: Sec-independent protein translocase protein TatB (195 aa).

A helical transmembrane segment spans residues 1 to 21; the sequence is MFDIGFSELALIAVVALVVLG. The interval 130–195 is disordered; sequence EPGSAQPHTP…SSTSPQEKTP (66 aa). Composition is skewed to low complexity over residues 145 to 157 and 175 to 195; these read PVVA…APAP and TTHA…EKTP.

Belongs to the TatB family. The Tat system comprises two distinct complexes: a TatABC complex, containing multiple copies of TatA, TatB and TatC subunits, and a separate TatA complex, containing only TatA subunits. Substrates initially bind to the TatABC complex, which probably triggers association of the separate TatA complex to form the active translocon.

The protein resides in the cell inner membrane. Part of the twin-arginine translocation (Tat) system that transports large folded proteins containing a characteristic twin-arginine motif in their signal peptide across membranes. Together with TatC, TatB is part of a receptor directly interacting with Tat signal peptides. TatB may form an oligomeric binding site that transiently accommodates folded Tat precursor proteins before their translocation. The sequence is that of Sec-independent protein translocase protein TatB from Xanthomonas campestris pv. campestris (strain 8004).